The chain runs to 349 residues: DNA fragmentation factor subunit beta (349 aa).

In terms of domain architecture, CIDE-N spans 7 to 83 (QPKCVKLRAL…LLTAGETWHG (77 aa)). The tract at residues 319–349 (RSRIYRPQTGSRRKQPPRKQPPRKRPPRKRQ) is disordered. Basic residues predominate over residues 329–349 (SRRKQPPRKQPPRKRPPRKRQ).

As to quaternary structure, heterodimer of DFFA and DFFB. Interacts with H1-1.

Its subcellular location is the cytoplasm. It localises to the nucleus. Inhibited by DFFA (DFF45). In terms of biological role, nuclease that induces DNA fragmentation and chromatin condensation during apoptosis. Degrades naked DNA and induces apoptotic morphology. The chain is DNA fragmentation factor subunit beta (Dffb) from Rattus norvegicus (Rat).